The sequence spans 206 residues: Superoxide dismutase [Mn] (206 aa).

Mn(2+) is bound by residues His-27, His-82, Asp-168, and His-172.

Belongs to the iron/manganese superoxide dismutase family. Homodimer. Mn(2+) is required as a cofactor.

It carries out the reaction 2 superoxide + 2 H(+) = H2O2 + O2. Functionally, destroys superoxide anion radicals which are normally produced within the cells and which are toxic to biological systems. This chain is Superoxide dismutase [Mn] (sodA), found in Escherichia coli O157:H7.